Here is a 574-residue protein sequence, read N- to C-terminus: Amino-acid acetyltransferase, mitochondrial (574 aa).

The N-terminal 13 residues, 1-13 (MWRRIFAHELKYD), are a transit peptide targeting the mitochondrion. The region spanning 392 to 560 (KGAKPSSNSP…KRLREFMRSV (169 aa)) is the N-acetyltransferase domain.

This sequence belongs to the acetyltransferase family. In terms of assembly, interacts with the acetylglutamate kinase chain of AGR5,6.

It is found in the mitochondrion. It carries out the reaction L-glutamate + acetyl-CoA = N-acetyl-L-glutamate + CoA + H(+). It participates in amino-acid biosynthesis; L-arginine biosynthesis; N(2)-acetyl-L-ornithine from L-glutamate: step 1/4. Its activity is regulated as follows. Feedback inhibition by L-arginine. Functionally, N-acetylglutamate synthase involved in arginine biosynthesis. The polypeptide is Amino-acid acetyltransferase, mitochondrial (ARG2) (Saccharomyces cerevisiae (strain RM11-1a) (Baker's yeast)).